Reading from the N-terminus, the 84-residue chain is Anaphase-promoting complex subunit 11 (84 aa).

Zn(2+)-binding residues include cysteine 23, cysteine 26, cysteine 34, cysteine 37, cysteine 44, cysteine 51, histidine 53, histidine 56, histidine 58, cysteine 59, cysteine 73, and cysteine 76. An RING-type zinc finger spans residues 34-77 (CPDCKVPGDDCPLVWGQCSHCFHMHCILKWLNAQQVQQHCPMCR).

It belongs to the RING-box family. The mammalian APC/C is composed at least of 14 distinct subunits ANAPC1, ANAPC2, CDC27/APC3, ANAPC4, ANAPC5, CDC16/APC6, ANAPC7, CDC23/APC8, ANAPC10, ANAPC11, CDC26/APC12, ANAPC13, ANAPC15 and ANAPC16 that assemble into a complex of at least 19 chains with a combined molecular mass of around 1.2 MDa; APC/C interacts with FZR1 and FBXO5. Interacts with the cullin domain of ANAPC2. Interacts with UBE2D2. Post-translationally, auto-ubiquitinated.

The protein resides in the cytoplasm. The protein localises to the nucleus. The protein operates within protein modification; protein ubiquitination. In terms of biological role, together with the cullin protein ANAPC2, constitutes the catalytic component of the anaphase promoting complex/cyclosome (APC/C), a cell cycle-regulated E3 ubiquitin ligase that controls progression through mitosis and the G1 phase of the cell cycle. The APC/C complex acts by mediating ubiquitination and subsequent degradation of target proteins: it mainly mediates the formation of 'Lys-11'-linked polyubiquitin chains and, to a lower extent, the formation of 'Lys-48'- and 'Lys-63'-linked polyubiquitin chains. The APC/C complex catalyzes assembly of branched 'Lys-11'-/'Lys-48'-linked branched ubiquitin chains on target proteins. May recruit the E2 ubiquitin-conjugating enzymes to the complex. This Bos taurus (Bovine) protein is Anaphase-promoting complex subunit 11 (ANAPC11).